The chain runs to 591 residues: MVTTSGQTTQGYVIEAYGNLLRVRFDGHVRQGEVAYVNVNDAWLKAEVIEVVGQEVKIQVFEDTQDVCRGALVTFSGHLLEAELGPGLLQEIFDGLQNRLQVLAESSFFLKRGEYVNALCKNTLWEYTPKAVVGDVLVRGDALGVVKEGYFNHKIMVPFSCFKEVTITWVISEGEYSVDTVVAKARDADGQEYSFTMVQKWPIKQAFIQGDKVPCHEIMDVGVRILDTQVPVLKGGTFCTPGPFGAGKTVLQHHLSKYAAVDIVILCACGERAGEVVEVLQEFPHLTDPHTGKSLMHRTCIICNTSSMPVAARESSIYLGITIAEYYRQMGLHVLLLADSTSRWAQALREISGRLEEIPGEEAFPAYLASRIAAFYERGGAVRMKDGSEGSLTICGAVSPAGGNFEEPVTQATLSVVGAFCGLSKARADARRYPSIDPMISWSKYLDQVGEILEDKVQGWGEAVKKANYFLREGSEIGKRMEVVGEEGIPMEDMEIYLKSELYDFCYLQQNAFDPVDCYCPFDRQIELFALMSRIFDARFNFDSPDNARSFFLELQSKIKTLNGQKFLSDEYKEGMEVVLRLLETKMVQTA.

242–249 (GPFGAGKT) contacts ATP.

This sequence belongs to the ATPase alpha/beta chains family.

It catalyses the reaction ATP + H2O + 4 H(+)(in) = ADP + phosphate + 5 H(+)(out). Produces ATP from ADP in the presence of a proton gradient across the membrane. The V-type alpha chain is a catalytic subunit. In Chlamydia abortus (strain DSM 27085 / S26/3) (Chlamydophila abortus), this protein is V-type ATP synthase alpha chain.